The chain runs to 268 residues: Undecaprenyl-diphosphatase 1 (268 aa).

7 helical membrane passes run 5-25 (TIVEALLLGLLEGLTEFIPVS), 43-63 (GKAFEILIQLGAILAILSVYF), 81-101 (HFVIGILIAFLPAAIIGALAH), 107-127 (VLFESPRLICTMLIIGGVILL), 185-205 (AEFSFFLAIPTMVGAFAFDLF), 214-234 (ADLPIIAIGFVAAFVTALFVV), and 248-268 (LFGWWRLVVGIVGLVALMIWG).

The protein belongs to the UppP family.

It localises to the cell inner membrane. It carries out the reaction di-trans,octa-cis-undecaprenyl diphosphate + H2O = di-trans,octa-cis-undecaprenyl phosphate + phosphate + H(+). In terms of biological role, catalyzes the dephosphorylation of undecaprenyl diphosphate (UPP). Confers resistance to bacitracin. This is Undecaprenyl-diphosphatase 1 from Mesorhizobium japonicum (strain LMG 29417 / CECT 9101 / MAFF 303099) (Mesorhizobium loti (strain MAFF 303099)).